A 38-amino-acid polypeptide reads, in one-letter code: Potassium channel toxin alpha-KTx 3.3 (38 aa).

3 cysteine pairs are disulfide-bonded: C8-C28, C14-C33, and C18-C35. The tract at residues G26–C33 is interaction with Ca(2+)-activated K(+) channels.

This sequence belongs to the short scorpion toxin superfamily. Potassium channel inhibitor family. Alpha-KTx 03 subfamily. In terms of tissue distribution, expressed by the venom gland.

It is found in the secreted. Its function is as follows. Potent inhibitor of shaker potassium channels as well as the mammalian homologs of shaker. The sequence is that of Potassium channel toxin alpha-KTx 3.3 from Leiurus hebraeus (Hebrew deathstalker scorpion).